The sequence spans 1914 residues: Autophagy-related protein 2 homolog A (1914 aa).

The Chorein N-terminal domain maps to E14 to G112. Residues S764, S869, S875, and S877 each carry the phosphoserine modification. Positions D1222 to S1243 are disordered. 3 positions are modified to phosphoserine: S1246, S1282, and S1290. Residues G1299–D1337 are disordered. The segment covering N1327–D1337 has biased composition (acidic residues). A WIPI-interacting region spans residues D1337–D1383. S1381 is subject to Phosphoserine. Disordered regions lie at residues L1427–G1452, M1589–D1634, and R1803–D1822. The segment covering G1429–S1446 has biased composition (low complexity).

Belongs to the ATG2 family. In terms of assembly, interacts with ATG9A (via C-terminus). Interacts with TMEM41B. Interacts with VMP1.

It localises to the preautophagosomal structure membrane. The protein localises to the lipid droplet. It is found in the endoplasmic reticulum membrane. The catalysed reaction is a 1,2-diacyl-sn-glycero-3-phospho-L-serine(in) = a 1,2-diacyl-sn-glycero-3-phospho-L-serine(out). The enzyme catalyses a 1,2-diacyl-sn-glycero-3-phosphoethanolamine(in) = a 1,2-diacyl-sn-glycero-3-phosphoethanolamine(out). Functionally, lipid transfer protein involved in autophagosome assembly. Tethers the edge of the isolation membrane (IM) to the endoplasmic reticulum (ER) and mediates direct lipid transfer from ER to IM for IM expansion. Binds to the ER exit site (ERES), which is the membrane source for autophagosome formation, and extracts phospholipids from the membrane source and transfers them to ATG9 (ATG9A or ATG9B) to the IM for membrane expansion. Lipid transfer activity is enhanced by WIPI1 and WDR45/WIPI4, which promote ATG2A-association with phosphatidylinositol 3-monophosphate (PI3P)-containing membranes. Also regulates lipid droplets morphology and distribution within the cell. Its function is as follows. (Microbial infection) Mediates the intracellular lifestyle of Cryptococcus neoformans by supporting infection. The polypeptide is Autophagy-related protein 2 homolog A (Mus musculus (Mouse)).